Reading from the N-terminus, the 64-residue chain is MKNIELASKDLNALNVELTELLKTGFKLRMQKGTQQLTNTSQLGKNKRDIARVKTFIAQKTAQK.

It belongs to the universal ribosomal protein uL29 family.

The sequence is that of Large ribosomal subunit protein uL29 from Polynucleobacter necessarius subsp. necessarius (strain STIR1).